Reading from the N-terminus, the 649-residue chain is tRNA-guanine(15) transglycosylase (649 aa).

Catalysis depends on Asp88, which acts as the Nucleophile. Substrate contacts are provided by Asp123 and Ala194. Residues Cys280, Cys282, and Cys285 each coordinate Zn(2+). One can recognise a PUA domain in the interval 573–648; that stretch reads NYRIVIDSSV…VAATLRGGIK (76 aa).

This sequence belongs to the archaeosine tRNA-ribosyltransferase family. The cofactor is Zn(2+).

The enzyme catalyses guanosine(15) in tRNA + 7-cyano-7-deazaguanine = 7-cyano-7-carbaguanosine(15) in tRNA + guanine. The protein operates within tRNA modification; archaeosine-tRNA biosynthesis. Its function is as follows. Exchanges the guanine residue with 7-cyano-7-deazaguanine (preQ0) at position 15 in the dihydrouridine loop (D-loop) of archaeal tRNAs. This is tRNA-guanine(15) transglycosylase from Methanococcus maripaludis (strain C5 / ATCC BAA-1333).